The following is a 627-amino-acid chain: (-)-beta-pinene synthase 1, chloroplastic (627 aa).

The transit peptide at 1-50 directs the protein to the chloroplast; it reads MDLISVLPSTSKSCVCLHKPLSSSTHKLKPFCRTIRILGMPRPRKSVLMA. Mg(2+)-binding residues include D378, D382, and D530. The DDXXD motif signature appears at 378–382; that stretch reads DDMYD.

It belongs to the terpene synthase family. Tpsd subfamily. The cofactor is Mg(2+). Requires Mn(2+) as cofactor.

The protein resides in the plastid. The protein localises to the chloroplast. The enzyme catalyses (2E)-geranyl diphosphate = (1S,5S)-beta-pinene + diphosphate. It carries out the reaction (2E)-geranyl diphosphate = (1S,5S)-alpha-pinene + diphosphate. Its pathway is terpene metabolism; oleoresin biosynthesis. The protein operates within secondary metabolite biosynthesis; terpenoid biosynthesis. In terms of biological role, monoterpene synthase (TPS) involved in the biosynthesis of monoterpene natural products included in conifer oleoresin secretions and volatile emissions; these compounds contribute to biotic and abiotic stress defense against herbivores and pathogens. Catalyzes the conversion of (2E)-geranyl diphosphate (GPP) to (-)-beta-pinene and, to a lower extent, to (-)-alpha-pinene. The polypeptide is (-)-beta-pinene synthase 1, chloroplastic (Pinus contorta (Shore pine)).